Consider the following 215-residue polypeptide: Pyridoxine/pyridoxamine 5'-phosphate oxidase (215 aa).

Residues 9 to 12 (RRDY) and lysine 69 contribute to the substrate site. Residues 64-69 (RVLLLK), 79-80 (FT), lysine 86, and glutamine 108 contribute to the FMN site. Positions 126, 130, and 134 each coordinate substrate. FMN is bound by residues 143 to 144 (QS) and tryptophan 188. 194–196 (RLH) is a binding site for substrate. An FMN-binding site is contributed by arginine 198.

It belongs to the pyridoxamine 5'-phosphate oxidase family. As to quaternary structure, homodimer. FMN is required as a cofactor.

It catalyses the reaction pyridoxamine 5'-phosphate + O2 + H2O = pyridoxal 5'-phosphate + H2O2 + NH4(+). The catalysed reaction is pyridoxine 5'-phosphate + O2 = pyridoxal 5'-phosphate + H2O2. Its pathway is cofactor metabolism; pyridoxal 5'-phosphate salvage; pyridoxal 5'-phosphate from pyridoxamine 5'-phosphate: step 1/1. The protein operates within cofactor metabolism; pyridoxal 5'-phosphate salvage; pyridoxal 5'-phosphate from pyridoxine 5'-phosphate: step 1/1. Its function is as follows. Catalyzes the oxidation of either pyridoxine 5'-phosphate (PNP) or pyridoxamine 5'-phosphate (PMP) into pyridoxal 5'-phosphate (PLP). This Pseudomonas entomophila (strain L48) protein is Pyridoxine/pyridoxamine 5'-phosphate oxidase.